The sequence spans 205 residues: ATP synthase subunit b 1 (205 aa).

The span at Met1–Gln15 shows a compositional bias: polar residues. The segment at Met1 to Ala26 is disordered. Low complexity predominate over residues Pro16–Ala26. Residues Ser56–Pro78 traverse the membrane as a helical segment.

This sequence belongs to the ATPase B chain family. In terms of assembly, F-type ATPases have 2 components, F(1) - the catalytic core - and F(0) - the membrane proton channel. F(1) has five subunits: alpha(3), beta(3), gamma(1), delta(1), epsilon(1). F(0) has three main subunits: a(1), b(2) and c(10-14). The alpha and beta chains form an alternating ring which encloses part of the gamma chain. F(1) is attached to F(0) by a central stalk formed by the gamma and epsilon chains, while a peripheral stalk is formed by the delta and b chains.

It localises to the cell inner membrane. F(1)F(0) ATP synthase produces ATP from ADP in the presence of a proton or sodium gradient. F-type ATPases consist of two structural domains, F(1) containing the extramembraneous catalytic core and F(0) containing the membrane proton channel, linked together by a central stalk and a peripheral stalk. During catalysis, ATP synthesis in the catalytic domain of F(1) is coupled via a rotary mechanism of the central stalk subunits to proton translocation. Its function is as follows. Component of the F(0) channel, it forms part of the peripheral stalk, linking F(1) to F(0). This chain is ATP synthase subunit b 1, found in Brucella anthropi (strain ATCC 49188 / DSM 6882 / CCUG 24695 / JCM 21032 / LMG 3331 / NBRC 15819 / NCTC 12168 / Alc 37) (Ochrobactrum anthropi).